The chain runs to 447 residues: Phosphoglucosamine mutase (447 aa).

Catalysis depends on Ser-104, which acts as the Phosphoserine intermediate. Ser-104, Asp-243, Asp-245, and Asp-247 together coordinate Mg(2+). Position 104 is a phosphoserine (Ser-104).

This sequence belongs to the phosphohexose mutase family. Mg(2+) is required as a cofactor. Post-translationally, activated by phosphorylation.

The catalysed reaction is alpha-D-glucosamine 1-phosphate = D-glucosamine 6-phosphate. Catalyzes the conversion of glucosamine-6-phosphate to glucosamine-1-phosphate. This is Phosphoglucosamine mutase from Corynebacterium aurimucosum (strain ATCC 700975 / DSM 44827 / CIP 107346 / CN-1) (Corynebacterium nigricans).